The primary structure comprises 662 residues: uncharacterized protein (662 aa).

Residues S145, E164, W173, D184, and Y190 each contribute to the FAD site. Positions S638–S662 are disordered.

It belongs to the FAD-binding monooxygenase family. The cofactor is FAD.

This is an uncharacterized protein from Sinorhizobium fredii (strain NBRC 101917 / NGR234).